We begin with the raw amino-acid sequence, 819 residues long: Lysine-specific demethylase JMJ18 (819 aa).

The disordered stretch occupies residues 1 to 39; sequence MENPPLESEIKEDMSLKNHPPDKDKDKDTIMEQPSSPRH. A compositionally biased stretch (basic and acidic residues) spans 8 to 30; the sequence is SEIKEDMSLKNHPPDKDKDKDTI. Residues 59-100 form the JmjN domain; it reads APVFTPSLEEFVDPLAYIEKIRPLAEPYGICRIIPPSTWKPP. The disordered stretch occupies residues 120–171; that stretch reads TVDLLQNREPMKKKPKSRKRKRRRNSRMGSSKRRSGSSPAESTSSPEAEEKF. The short motif at 130 to 137 is the Nuclear localization signal element; the sequence is MKKKPKSR. Over residues 130–154 the composition is skewed to basic residues; it reads MKKKPKSRKRKRRRNSRMGSSKRRS. The segment covering 155–165 has biased composition (low complexity); it reads GSSPAESTSSP. One can recognise a JmjC domain in the interval 261–427; the sequence is QYTLSGWNLN…HGQNAVELYS (167 aa). Fe cation-binding residues include His307, Glu309, and His395. Positions 519, 522, 533, 535, 542, 545, 550, and 552 each coordinate Zn(2+). Residues 519–571 form a C5HC2 zinc finger; sequence CFSCFYDLHLSASGCKCSPEEYACLKHADDLCSCDVKDGFILLRYTMDELSSL. The FYR N-terminal domain maps to 644 to 702; sequence ASENLGVSVEPINLGFLIFGKLWCNKYAIFPKGFRSRVKFYNVLDPTRMSNYISEVLDA. The region spanning 704-788 is the FYR C-terminal domain; sequence LMGPLFRVTL…HRLVEYWNHK (85 aa).

The protein belongs to the JARID1 histone demethylase family. Fe(2+) serves as cofactor. Expressed in vascular tissues of roots, cotyledons, leaves and flowers. Expressed predominantly in phloem companion cells of roots. Present in inflorescences, roots, siliques, leaves and stems.

The protein localises to the nucleus. The catalysed reaction is N(6),N(6),N(6)-trimethyl-L-lysyl(4)-[histone H3] + 2-oxoglutarate + O2 = N(6),N(6)-dimethyl-L-lysyl(4)-[histone H3] + formaldehyde + succinate + CO2. It catalyses the reaction N(6),N(6)-dimethyl-L-lysyl(4)-[histone H3] + 2-oxoglutarate + O2 = N(6)-methyl-L-lysyl(4)-[histone H3] + formaldehyde + succinate + CO2. Its function is as follows. Histone demethylase that demethylates 'Lys-4' (H3K4me) of histone H3 with a specific activity for H3K4me3 and H3K4me2. No activity on H3K9me3/2, H3K27me3/2 and H3K36me3/2. Involved in the control of flowering time by demethylating H3K4me3 at the FLC locus and repressing its expression. The repression of FLC level and reduction in H3K4me3 at the FLC locus results in induction of the flowering activator FT, which is a downstream target of FLC. This chain is Lysine-specific demethylase JMJ18, found in Arabidopsis thaliana (Mouse-ear cress).